We begin with the raw amino-acid sequence, 251 residues long: UPF0309 protein SCO4393 (251 aa).

Positions 36–220 (LADTVQNGGR…AATLADRGIE (185 aa)) constitute an SIS domain.

Belongs to the UPF0309 family.

The chain is UPF0309 protein SCO4393 from Streptomyces coelicolor (strain ATCC BAA-471 / A3(2) / M145).